A 303-amino-acid chain; its full sequence is MSKEHTLSQNISRVNFKELQQIIKMGLVQGNLIPAFAGAWLAVVMTNHSFLSSIPQILLMLLGSTLIMGGACALNNYYDQDIDRIMPSKQNRPTVNNRITDQNLLLLSFGMMLVGEICLFLLNIPSGVLGLMGIVGYVSYYSIWSKRHTTWNTVIGSFPGAVPPLIGWVAIEGQISLTAIALFLVVFCWQPIHFYALAIKRKDEYALANIPMLPSVKGFKRTRVSMFIWLIILLPVPLLLINLGVVFVVLATLLNLGWIALGLTTFKKNSDQTKWATQMFIYSLNYLVIFFVLAVIVSLLTLI.

9 helical membrane passes run 25–45 (MGLVQGNLIPAFAGAWLAVVM), 54–74 (IPQILLMLLGSTLIMGGACAL), 104–124 (LLLLSFGMMLVGEICLFLLNI), 125–145 (PSGVLGLMGIVGYVSYYSIWS), 151–171 (WNTVIGSFPGAVPPLIGWVAI), 179–199 (AIALFLVVFCWQPIHFYALAI), 227–247 (FIWLIILLPVPLLLINLGVVF), 248–268 (VVLATLLNLGWIALGLTTFKK), and 280–300 (FIYSLNYLVIFFVLAVIVSLL).

Belongs to the UbiA prenyltransferase family. Protoheme IX farnesyltransferase subfamily. Interacts with CtaA.

It localises to the cell membrane. It carries out the reaction heme b + (2E,6E)-farnesyl diphosphate + H2O = Fe(II)-heme o + diphosphate. It participates in porphyrin-containing compound metabolism; heme O biosynthesis; heme O from protoheme: step 1/1. Its function is as follows. Converts heme B (protoheme IX) to heme O by substitution of the vinyl group on carbon 2 of heme B porphyrin ring with a hydroxyethyl farnesyl side group. The sequence is that of Protoheme IX farnesyltransferase from Staphylococcus aureus (strain bovine RF122 / ET3-1).